Reading from the N-terminus, the 137-residue chain is uncharacterized protein (137 aa).

Residues 4–118 (YEGNCLCKAI…CIDDKPDCYD (115 aa)) form the CENP-V/GFA domain. The Zn(2+) site is built by cysteine 8, cysteine 10, cysteine 27, cysteine 29, cysteine 32, cysteine 71, and cysteine 74.

This sequence belongs to the Gfa family. It depends on Zn(2+) as a cofactor.

It is found in the cytoplasm. The protein resides in the nucleus. This is an uncharacterized protein from Schizosaccharomyces pombe (strain 972 / ATCC 24843) (Fission yeast).